A 233-amino-acid chain; its full sequence is ATP-dependent Clp protease proteolytic subunit 1 (233 aa).

Catalysis depends on serine 116, which acts as the Nucleophile. Histidine 141 is a catalytic residue.

This sequence belongs to the peptidase S14 family. As to quaternary structure, fourteen ClpP subunits assemble into 2 heptameric rings which stack back to back to give a disk-like structure with a central cavity, resembling the structure of eukaryotic proteasomes.

The protein localises to the cytoplasm. The catalysed reaction is Hydrolysis of proteins to small peptides in the presence of ATP and magnesium. alpha-casein is the usual test substrate. In the absence of ATP, only oligopeptides shorter than five residues are hydrolyzed (such as succinyl-Leu-Tyr-|-NHMec, and Leu-Tyr-Leu-|-Tyr-Trp, in which cleavage of the -Tyr-|-Leu- and -Tyr-|-Trp bonds also occurs).. In terms of biological role, cleaves peptides in various proteins in a process that requires ATP hydrolysis. Has a chymotrypsin-like activity. Plays a major role in the degradation of misfolded proteins. The chain is ATP-dependent Clp protease proteolytic subunit 1 from Salinibacter ruber (strain DSM 13855 / M31).